An 822-amino-acid chain; its full sequence is Cation/H(+) antiporter 3 (822 aa).

Transmembrane regions (helical) follow at residues 55-75, 116-136, 150-170, 190-210, 224-244, 274-294, 305-325, 331-351, 362-382, 388-408, 418-438, and 447-467; these read FPHL…LHFF, EIVF…LMGV, AITI…VIFF, YVVI…NLLF, ISSA…LIFM, IVVL…FYII, AIYL…ANWC, MGPF…SAII, FLPF…LFGW, IILI…VPAL, FALS…YALA, and ETFT…PPIL.

It belongs to the monovalent cation:proton antiporter 2 (CPA2) transporter (TC 2.A.37) family. CHX (TC 2.A.37.4) subfamily.

The protein resides in the membrane. May operate as a cation/H(+) antiporter. In Arabidopsis thaliana (Mouse-ear cress), this protein is Cation/H(+) antiporter 3 (CHX3).